Reading from the N-terminus, the 208-residue chain is Glutathione S-transferase F6 (208 aa).

Residues 2–83 enclose the GST N-terminal domain; it reads AGIKVFGHPA…YIAHEFSDKG (82 aa). Residues 12–13, 41–42, 54–55, and 67–68 contribute to the glutathione site; these read ST, HK, KV, and ES. The GST C-terminal domain occupies 89–208; the sequence is TGKDMAIIAM…TSRPSAQKVL (120 aa).

This sequence belongs to the GST superfamily. Phi family.

Its subcellular location is the cytoplasm. The protein localises to the cytosol. It catalyses the reaction RX + glutathione = an S-substituted glutathione + a halide anion + H(+). Its function is as follows. Involved in camalexin biosynthesis by probably catalyzing the conjugation of GSH with indole-3-acetonitrile (IAN). May be involved in the conjugation of reduced glutathione to a wide number of exogenous and endogenous hydrophobic electrophiles and have a detoxification role against certain herbicides. This chain is Glutathione S-transferase F6 (GSTF6), found in Arabidopsis thaliana (Mouse-ear cress).